Reading from the N-terminus, the 61-residue chain is MPIVNVKLLEGRSDEQLKNLVSEVTDAVEKTTGANRQAIHVVIEEMKPNHYGVAGVRKSDQ.

Pro-2 functions as the Proton acceptor; via imino nitrogen in the catalytic mechanism.

The protein belongs to the 4-oxalocrotonate tautomerase family.

This is Probable tautomerase SAV1363 from Staphylococcus aureus (strain Mu50 / ATCC 700699).